The following is a 144-amino-acid chain: Bombinins BLP-7/GH-2 (144 aa).

The first 18 residues, 1–18, serve as a signal peptide directing secretion; it reads MNFKYIVAVSFLIASTYA. The propeptide occupies 19–43; the sequence is RSVKNDEQSLSQRDVLEEESLREIR. Residue N70 is modified to Asparagine amide. The propeptide occupies 74–123; that stretch reads TAEEHEVMKRLEAVMRDLDSLDYPEEASEMETRSFNQEEIANLFTKKEKR. I143 is modified (isoleucine amide).

The protein belongs to the bombinin family. As to expression, expressed by the skin glands.

It localises to the secreted. Antimicrobial peptide with activity against Gram-positive and -negative bacteria and fungi. Shows activity against P.acnes (MIC=5 uM), E.coli (MIC=5-6.3 uM), S.aureus (MIC=5-6.3 uM), M.luteus, S.cerevisiae and C.albicans (MIC=10-12.5 uM). Also reduces the production of interleukin (IL)-8 and granulocyte-macrophage colony stimulating factor (CSF2) in normal human epidermal keratinocytes (NHEKs). Shows anticancer activity against three human hepatoma cell lines. In vivo, using the rat ear edema model, suppress P.acnes-induced skin inflammation, significantly reducing the ear thickness. Shows weak hemolytic activity against human erythrocytes. Its function is as follows. Shows weak antimicrobial activity but high hemolytic activity. The protein is Bombinins BLP-7/GH-2 of Bombina orientalis (Oriental fire-bellied toad).